A 657-amino-acid polypeptide reads, in one-letter code: Knob-associated histidine-rich protein (657 aa).

The first 34 residues, 1-34, serve as a signal peptide directing secretion; the sequence is MKSFKNKNTLRRKKAFPVFTKILLVSFLVWVLKC. Asn-42 carries an N-linked (GlcNAc...) asparagine glycan. A compositionally biased stretch (basic residues) spans 57-76; sequence AQKQHEHHHHHHHHHHHQHQ. Disordered stretches follow at residues 57 to 138, 282 to 301, and 352 to 657; these read AQKQ…PSNE, AHDGSHGNLRGHDNKGSEGY, and VNKY…GCCG. Positions 99 to 108 are enriched in low complexity; that stretch reads PQVHQQVHGQ. The span at 112-123 shows a compositional bias: basic residues; sequence HHHHHHHHHHLH. Basic and acidic residues-rich tracts occupy residues 357 to 378 and 399 to 408; these read KHGDEKHHSSKKHEGNDGEGEK and KDNEDAESVK. Over residues 409-425 the composition is skewed to basic residues; it reads SKKHKSHDCEKKKSKKH. Residues 426-435 show a composition bias toward basic and acidic residues; the sequence is KDNEDAESVK. A compositionally biased stretch (basic residues) spans 453–468; sequence AAKKLTKKIKIKKKTN. Residues 473–496 are compositionally biased toward basic and acidic residues; it reads DGSKAHEKKENETKNTAGENKKVD. Residues 497–508 show a composition bias toward polar residues; sequence STSADNKSTNAA. 2 stretches are compositionally biased toward basic and acidic residues: residues 512–523 and 551–578; these read AKDKTQGGKTDK and STSKEATKEASTSKEATKEASTSKEATK. Over residues 590–614 the composition is skewed to low complexity; it reads ASTTEGATKGASTTAGSTTGATTGA. Positions 628–643 are enriched in polar residues; the sequence is AANNGEQVMSRGQAQL. The segment covering 648 to 657 has biased composition (basic residues); the sequence is KKKKKRGCCG.

The protein localises to the secreted. Functionally, KAHRP might mimick human histidine-rich glycoproteins to anchor host thrombospondin or a parasite analog in a binding complex with the endothelial cell receptor. This is Knob-associated histidine-rich protein (SD17) from Plasmodium falciparum (isolate NF7 / Ghana).